Here is a 369-residue protein sequence, read N- to C-terminus: Methylthioribose-1-phosphate isomerase (369 aa).

Residues 54–56 (RGA), Arg95, and Gln208 contribute to the substrate site. The Proton donor role is filled by Asp249. Substrate is bound at residue 259–260 (NK).

The protein belongs to the eIF-2B alpha/beta/delta subunits family. MtnA subfamily.

It catalyses the reaction 5-(methylsulfanyl)-alpha-D-ribose 1-phosphate = 5-(methylsulfanyl)-D-ribulose 1-phosphate. Its pathway is amino-acid biosynthesis; L-methionine biosynthesis via salvage pathway; L-methionine from S-methyl-5-thio-alpha-D-ribose 1-phosphate: step 1/6. In terms of biological role, catalyzes the interconversion of methylthioribose-1-phosphate (MTR-1-P) into methylthioribulose-1-phosphate (MTRu-1-P). This Desulfosudis oleivorans (strain DSM 6200 / JCM 39069 / Hxd3) (Desulfococcus oleovorans) protein is Methylthioribose-1-phosphate isomerase.